We begin with the raw amino-acid sequence, 503 residues long: Zinc finger and BTB domain-containing protein 37 (503 aa).

Residues Cys32–Leu96 enclose the BTB domain. Disordered stretches follow at residues Gln140 to Glu206 and Gly280 to Glu344. The segment covering Lys144–Arg154 has biased composition (basic and acidic residues). Residues Val155–His167 are compositionally biased toward polar residues. A compositionally biased stretch (basic and acidic residues) spans Thr319–Lys336. C2H2-type zinc fingers lie at residues Leu373 to His395, Phe401 to His423, and Phe429 to His452. The interval Pro457–Asp503 is disordered. Residues Ser465–Gly474 show a composition bias toward polar residues.

It is found in the nucleus. In terms of biological role, may be involved in transcriptional regulation. This chain is Zinc finger and BTB domain-containing protein 37 (ZBTB37), found in Homo sapiens (Human).